The chain runs to 440 residues: MGDLELLLPGEAEVLVRGLRSFPLREMGSEGWNQQHENLEKLNMQAILDATVSQGEPIQELLVTHGKVPTLVEELIAVEMWKQKVFPVFCRVEDFKPQNTFPIYMVVHHEASIINLLETVFFHKEVCESAEDTVLDLVDYCHRKLTLLVAQSGCGGPPEGEGSQDSNPMQELQKQAELMEFEIALKALSVLRYITDCVDSLSLSTLSRMLSTHNLPCLLVELLEHSPWSRREGGKLQQFEGSRWHTVAPSEQQKLSKLDGQVWIALYNLLLSPEAQARYCLTSFAKGRLLKLRAFLTDTLLDQLPNLAHLQSFLAHLTLTETQPPKKDLVLEQIPEIWERLERENRGKWQAIAKHQLQHVFSPSEQDLRLQARRWAETYRLDVLEAVAPERPRCAYCSAEASKRCSRCQNEWYCCRECQVKHWEKHGKTCVLAAQGDRAK.

Positions 366–440 are interaction with DNAAF11; it reads QDLRLQARRW…VLAAQGDRAK (75 aa). 8 residues coordinate Zn(2+): C394, C397, C405, C408, C414, C418, H426, and C430. The segment at 394–430 adopts an MYND-type zinc-finger fold; that stretch reads CAYCSAEASKRCSRCQNEWYCCRECQVKHWEKHGKTC.

Belongs to the ZMYND10 family. In terms of assembly, interacts (via C-terminus) with DNAAF11 (via CS domain); this interaction stabilizes DNAAF11 at the protein level. Interacts (via C-terminus) with DNAL1; this interaction stabilizes DNAL1 at the protein level. Interacts with DNAAF4, HSPA8, IQUB, RUVBL2 and DYNTL5.

Its subcellular location is the cytoplasm. It localises to the cytoskeleton. It is found in the microtubule organizing center. The protein localises to the centrosome. The protein resides in the centriolar satellite. Its subcellular location is the apical cell membrane. It localises to the dynein axonemal particle. Functionally, plays a role in axonemal structure organization and motility. Involved in axonemal pre-assembly of inner and outer dynein arms (IDA and ODA, respectively) for proper axoneme building for cilia motility. May act by indirectly regulating transcription of dynein proteins. The chain is Zinc finger MYND domain-containing protein 10 from Homo sapiens (Human).